Reading from the N-terminus, the 136-residue chain is ATP synthase epsilon chain, plastid (136 aa).

The protein belongs to the ATPase epsilon chain family. As to quaternary structure, F-type ATPases have 2 components, CF(1) - the catalytic core - and CF(0) - the membrane proton channel. CF(1) has five subunits: alpha(3), beta(3), gamma(1), delta(1), epsilon(1). CF(0) has three main subunits: a, b and c.

The protein resides in the plastid thylakoid membrane. Its function is as follows. Produces ATP from ADP in the presence of a proton gradient across the membrane. The sequence is that of ATP synthase epsilon chain, plastid from Cuscuta reflexa (Southern Asian dodder).